Consider the following 586-residue polypeptide: Probable zinc metalloprotease EGY3, chloroplastic (586 aa).

A chloroplast-targeting transit peptide spans 1 to 54 (MASSSLVTSLLFSSSSSSNTATSTSSRRSFSLFSKNQYCKPRPLRRSSSRLLVR). Disordered stretches follow at residues 13–32 (SSSSSSNTATSTSSRRSFSL) and 58–122 (QQQQ…DWRS). Basic and acidic residues predominate over residues 61 to 73 (QEEKAAPAAESHH). Residues 103–195 (VKKSKEELEE…NTFKALDLNK (93 aa)) adopt a coiled-coil conformation. 7 helical membrane-spanning segments follow: residues 287–307 (LSAVALAVTTFGTIAIMSGFF), 318–338 (VSDVLPLFAGFLSILGVSEIA), 389–409 (ASAYLTSVALAVSAFVSDGSL), 427–447 (PLLSFVQAVIGPYADELGNVL), 454–474 (VGVPVDPLAFAGLLGIVVTSL), 506–526 (VALGAGAIIGGSVLCLAWGLF), and 550–570 (YAWGLVLAVVCLLTLFPNGGG).

It belongs to the peptidase M50B family.

The protein localises to the plastid. It localises to the chloroplast membrane. In terms of biological role, probable membrane-associated metalloprotease that may be involved in chloroplast development. The protein is Probable zinc metalloprotease EGY3, chloroplastic (EGY3) of Oryza sativa subsp. japonica (Rice).